The primary structure comprises 965 residues: 26S proteasome non-ATPase regulatory subunit 1 (965 aa).

8 PC repeats span residues 380–413 (NAVA…EGFG), 418–452 (GAML…EPVR), 454–488 (GACL…VSGE), 489–523 (SAGI…DKTQ), 560–595 (TGIC…DVKR), 630–664 (GAAM…FVRK), 665–706 (GALL…SLVK), and 708–738 (GAII…DMGS). Positions 836–856 (ASASSAAAAPSSSSTSGTAPA) are enriched in low complexity. Disordered stretches follow at residues 836-889 (ASAS…LQNP) and 943-965 (TPAS…INDF). Over residues 863–882 (EVDQPGKSKKEKAPEKDTKP) the composition is skewed to basic and acidic residues.

This sequence belongs to the proteasome subunit S1 family.

Its function is as follows. Acts as a regulatory subunit of the 26 proteasome which is involved in the ATP-dependent degradation of ubiquitinated proteins. The sequence is that of 26S proteasome non-ATPase regulatory subunit 1 (rpn-2) from Caenorhabditis elegans.